The following is a 373-amino-acid chain: Chaperone protein DnaJ (373 aa).

Residues asparagine 4–glycine 69 form the J domain. Residues glycine 133–lysine 210 form a CR-type zinc finger. Zn(2+)-binding residues include cysteine 146, cysteine 149, cysteine 162, cysteine 165, cysteine 184, cysteine 187, cysteine 198, and cysteine 201. CXXCXGXG motif repeat units follow at residues cysteine 146 to glycine 153, cysteine 162 to glycine 169, cysteine 184 to glycine 191, and cysteine 198 to glycine 205.

This sequence belongs to the DnaJ family. In terms of assembly, homodimer. The cofactor is Zn(2+).

It is found in the cytoplasm. Participates actively in the response to hyperosmotic and heat shock by preventing the aggregation of stress-denatured proteins and by disaggregating proteins, also in an autonomous, DnaK-independent fashion. Unfolded proteins bind initially to DnaJ; upon interaction with the DnaJ-bound protein, DnaK hydrolyzes its bound ATP, resulting in the formation of a stable complex. GrpE releases ADP from DnaK; ATP binding to DnaK triggers the release of the substrate protein, thus completing the reaction cycle. Several rounds of ATP-dependent interactions between DnaJ, DnaK and GrpE are required for fully efficient folding. Also involved, together with DnaK and GrpE, in the DNA replication of plasmids through activation of initiation proteins. The sequence is that of Chaperone protein DnaJ from Campylobacter lari (strain RM2100 / D67 / ATCC BAA-1060).